The chain runs to 261 residues: Thiazole synthase (261 aa).

Lys-102 serves as the catalytic Schiff-base intermediate with DXP. Residues Gly-163, 189–190 (AG), and 211–212 (NT) each bind 1-deoxy-D-xylulose 5-phosphate.

Belongs to the ThiG family. As to quaternary structure, homotetramer. Forms heterodimers with either ThiH or ThiS.

The protein localises to the cytoplasm. The enzyme catalyses [ThiS sulfur-carrier protein]-C-terminal-Gly-aminoethanethioate + 2-iminoacetate + 1-deoxy-D-xylulose 5-phosphate = [ThiS sulfur-carrier protein]-C-terminal Gly-Gly + 2-[(2R,5Z)-2-carboxy-4-methylthiazol-5(2H)-ylidene]ethyl phosphate + 2 H2O + H(+). It participates in cofactor biosynthesis; thiamine diphosphate biosynthesis. In terms of biological role, catalyzes the rearrangement of 1-deoxy-D-xylulose 5-phosphate (DXP) to produce the thiazole phosphate moiety of thiamine. Sulfur is provided by the thiocarboxylate moiety of the carrier protein ThiS. In vitro, sulfur can be provided by H(2)S. This chain is Thiazole synthase, found in Acinetobacter baumannii (strain AB307-0294).